Reading from the N-terminus, the 184-residue chain is ADP-ribosylation factor-like protein 2 (184 aa).

Gly-2 carries the N-myristoyl glycine lipid modification. 23–30 (GLDNAGKT) contributes to the GTP binding site. A Phosphoserine modification is found at Ser-45. GTP is bound by residues 66–70 (DVGGQ) and Gly-68. Residue Lys-71 forms a Glycyl lysine isopeptide (Lys-Gly) (interchain with G-Cter in ubiquitin) linkage. 125–128 (NKQD) contributes to the GTP binding site.

It belongs to the small GTPase superfamily. Arf family. Found in a complex with ARL2, ARL2BP and SLC25A6. Found in a complex with at least ARL2, PPP2CB, PPP2R1A, PPP2R2A, PPP2R5E and TBCD. Found in a complex with ARL2, ARL2BP and SLC25A4. The GTP-bound form interacts with PDE6D. Interacts with ELMOD2. The GTP-bound form interacts with ARL2BP. Interacts, preferentially in its GDP-bound state, with TBCD. Interacts with UNC119. Post-translationally, not N-myristoylated.

The protein resides in the mitochondrion intermembrane space. It localises to the cytoplasm. The protein localises to the cytoskeleton. It is found in the microtubule organizing center. Its subcellular location is the centrosome. The protein resides in the nucleus. In terms of biological role, small GTP-binding protein which cycles between an inactive GDP-bound and an active GTP-bound form, and the rate of cycling is regulated by guanine nucleotide exchange factors (GEF) and GTPase-activating proteins (GAP). GTP-binding protein that does not act as an allosteric activator of the cholera toxin catalytic subunit. Regulates formation of new microtubules and centrosome integrity. Prevents the TBCD-induced microtubule destruction. Participates in association with TBCD, in the disassembly of the apical junction complexes. Antagonizes the effect of TBCD on epithelial cell detachment and tight and adherens junctions disassembly. Together with ARL2, plays a role in the nuclear translocation, retention and transcriptional activity of STAT3. Component of a regulated secretory pathway involved in Ca(2+)-dependent release of acetylcholine. Required for normal progress through the cell cycle. Also regulates mitochondrial integrity and function. This is ADP-ribosylation factor-like protein 2 (ARL2) from Homo sapiens (Human).